We begin with the raw amino-acid sequence, 386 residues long: Succinate--CoA ligase [ADP-forming] subunit beta (386 aa).

The region spanning 9–244 is the ATP-grasp domain; sequence KEILRSYGVS…LDEEDPKEVE (236 aa). ATP is bound by residues lysine 46, 53–55, glutamate 99, cysteine 102, and glutamate 107; that span reads GRG. Mg(2+) is bound by residues asparagine 199 and aspartate 213. Residues asparagine 264 and 321–323 each bind substrate; that span reads GIM.

It belongs to the succinate/malate CoA ligase beta subunit family. Heterotetramer of two alpha and two beta subunits. The cofactor is Mg(2+).

It carries out the reaction succinate + ATP + CoA = succinyl-CoA + ADP + phosphate. It catalyses the reaction GTP + succinate + CoA = succinyl-CoA + GDP + phosphate. Its pathway is carbohydrate metabolism; tricarboxylic acid cycle; succinate from succinyl-CoA (ligase route): step 1/1. Its function is as follows. Succinyl-CoA synthetase functions in the citric acid cycle (TCA), coupling the hydrolysis of succinyl-CoA to the synthesis of either ATP or GTP and thus represents the only step of substrate-level phosphorylation in the TCA. The beta subunit provides nucleotide specificity of the enzyme and binds the substrate succinate, while the binding sites for coenzyme A and phosphate are found in the alpha subunit. In Geobacillus kaustophilus (strain HTA426), this protein is Succinate--CoA ligase [ADP-forming] subunit beta.